We begin with the raw amino-acid sequence, 879 residues long: Alanine--tRNA ligase (879 aa).

Zn(2+)-binding residues include H567, H571, C669, and H673.

The protein belongs to the class-II aminoacyl-tRNA synthetase family. Zn(2+) serves as cofactor.

It localises to the cytoplasm. The enzyme catalyses tRNA(Ala) + L-alanine + ATP = L-alanyl-tRNA(Ala) + AMP + diphosphate. In terms of biological role, catalyzes the attachment of alanine to tRNA(Ala) in a two-step reaction: alanine is first activated by ATP to form Ala-AMP and then transferred to the acceptor end of tRNA(Ala). Also edits incorrectly charged Ser-tRNA(Ala) and Gly-tRNA(Ala) via its editing domain. This chain is Alanine--tRNA ligase, found in Lactobacillus helveticus (strain DPC 4571).